Reading from the N-terminus, the 463-residue chain is Chaperone SurA (463 aa).

An N-terminal signal peptide occupies residues 1 to 25; sequence MTKPFSVVLASLLAITSTVSPLASA. 2 PpiC domains span residues 174 to 276 and 289 to 388; these read GSQY…KLVE and VTEY…QRVG. Disordered stretches follow at residues 329–348 and 431–463; these read ATAK…GDLG and YRTG…KPTR. Positions 441-450 are enriched in low complexity; the sequence is ATAAPAKSPD. The segment covering 451–463 has biased composition (pro residues); it reads PAAPSPPPAKPTR.

The protein localises to the periplasm. The catalysed reaction is [protein]-peptidylproline (omega=180) = [protein]-peptidylproline (omega=0). In terms of biological role, chaperone involved in the correct folding and assembly of outer membrane proteins. Recognizes specific patterns of aromatic residues and the orientation of their side chains, which are found more frequently in integral outer membrane proteins. May act in both early periplasmic and late outer membrane-associated steps of protein maturation. This Xanthomonas axonopodis pv. citri (strain 306) protein is Chaperone SurA.